The sequence spans 693 residues: Subtilisin-like protease SBT4.10 (693 aa).

A signal peptide spans 1 to 25; sequence MAKLREASFCALACVLVLFLSFVSA. The propeptide at 26-113 is activation peptide; sequence DTYNRQDKQV…VFPSKKYKLH (88 aa). Positions 35 to 113 constitute an Inhibitor I9 domain; sequence VYVVYMGSLP…VFPSKKYKLH (79 aa). The Peptidase S8 domain maps to 117 to 536; the sequence is SWDFMGLKEG…SGHIDPIAAI (420 aa). The Charge relay system role is filled by Asp-145. Asn-176 carries an N-linked (GlcNAc...) asparagine glycan. His-200 functions as the Charge relay system in the catalytic mechanism. N-linked (GlcNAc...) asparagine glycosylation is found at Asn-215, Asn-223, Asn-368, Asn-413, and Asn-467. The PA domain occupies 354-396; the sequence is QYPLVYETSVEKCNNESLTTLALSFLTLTPQSNEQIISMFHTL. The active-site Charge relay system is the Ser-475. N-linked (GlcNAc...) asparagine glycans are attached at residues Asn-559, Asn-603, and Asn-613.

It belongs to the peptidase S8 family. The C-terminal propeptide is autocleaved.

It is found in the secreted. The chain is Subtilisin-like protease SBT4.10 from Arabidopsis thaliana (Mouse-ear cress).